The following is a 366-amino-acid chain: tRNA/tmRNA (uracil-C(5))-methyltransferase (366 aa).

S-adenosyl-L-methionine-binding residues include Q187, Y215, N220, E236, and D297. The active-site Nucleophile is C322. Catalysis depends on E356, which acts as the Proton acceptor.

Belongs to the class I-like SAM-binding methyltransferase superfamily. RNA M5U methyltransferase family. TrmA subfamily.

The enzyme catalyses uridine(54) in tRNA + S-adenosyl-L-methionine = 5-methyluridine(54) in tRNA + S-adenosyl-L-homocysteine + H(+). It catalyses the reaction uridine(341) in tmRNA + S-adenosyl-L-methionine = 5-methyluridine(341) in tmRNA + S-adenosyl-L-homocysteine + H(+). In terms of biological role, dual-specificity methyltransferase that catalyzes the formation of 5-methyluridine at position 54 (m5U54) in all tRNAs, and that of position 341 (m5U341) in tmRNA (transfer-mRNA). The polypeptide is tRNA/tmRNA (uracil-C(5))-methyltransferase (Marinomonas sp. (strain MWYL1)).